The chain runs to 291 residues: ATP synthase gamma chain (291 aa).

The protein belongs to the ATPase gamma chain family. F-type ATPases have 2 components, CF(1) - the catalytic core - and CF(0) - the membrane proton channel. CF(1) has five subunits: alpha(3), beta(3), gamma(1), delta(1), epsilon(1). CF(0) has three main subunits: a, b and c.

It localises to the cell inner membrane. In terms of biological role, produces ATP from ADP in the presence of a proton gradient across the membrane. The gamma chain is believed to be important in regulating ATPase activity and the flow of protons through the CF(0) complex. In Cupriavidus pinatubonensis (strain JMP 134 / LMG 1197) (Cupriavidus necator (strain JMP 134)), this protein is ATP synthase gamma chain.